The following is a 481-amino-acid chain: Tripartite motif-containing protein 10 (481 aa).

The RING-type zinc-finger motif lies at 16-61 (CPICQGTLREPVTIDCGHNFCRACLTRYCEIPGPDLEESPTCPLCK). A B box-type zinc finger spans residues 94–135 (GEEDVCQEHGEKIYFFCEDDEMQLCVVCREAGEHATHTMRFL). Zn(2+) is bound by residues C99, H102, C121, and H127. The stretch at 150 to 177 (LKCLRKEREEIQEIQSRENKRMQVLLTQ) forms a coiled coil. The B30.2/SPRY domain occupies 292–481 (REMKMFLEKL…GRGSSFSLSS (190 aa)).

Belongs to the TRIM/RBCC family. As to quaternary structure, interacts with IFNAR1; this interaction prevents association of IFNAR1 with TYK2.

It localises to the cytoplasm. E3 ligase that plays an essential role in the differentiation and survival of terminal erythroid cells. May directly bind to PTEN and promote its ubiquitination, resulting in its proteasomal degradation and activation of hypertrophic signaling. In addition, plays a role in immune response regulation by repressing the phosphorylation of STAT1 and STAT2 in the interferon/JAK/STAT signaling pathway independent of its E3 ligase activity. Mechanistically, interacts with the intracellular domain of IFNAR1 and thereby inhibits the association between TYK2 and IFNAR1. The sequence is that of Tripartite motif-containing protein 10 (TRIM10) from Homo sapiens (Human).